The primary structure comprises 287 residues: Movement protein BC1 (287 aa).

The protein belongs to the begomovirus movement protein BC1 family. Binds to dimeric supercoiled plasmid DNA. Post-translationally, phosphorylated.

The protein resides in the host cell membrane. The protein localises to the host microsome membrane. Its subcellular location is the host endoplasmic reticulum membrane. Functionally, transports viral genome to neighboring plant cells directly through plasmosdesmata, without any budding. The movement protein allows efficient cell to cell propagation, by bypassing the host cell wall barrier. Begomovirus genome is shuttled out of nucleus by Nuclear shuttle protein (NSP) and the movement protein transports the DNA-NSP complex to cell plasmodesmata and facilitates further movement across the cell wall. The polypeptide is Movement protein BC1 (Manihot esculenta (Cassava)).